Reading from the N-terminus, the 405-residue chain is uncharacterized protein (405 aa).

Over 1–18 the chain is Cytoplasmic; it reads MPEPVAEPALNGLRLNLR. Residues 19–39 form a helical membrane-spanning segment; it reads IVSIVMFNFASYLTIGLPLAV. The Periplasmic portion of the chain corresponds to 40-46; the sequence is LPGYVHD. A helical membrane pass occupies residues 47 to 67; sequence VMGFSAFWAGLVISLQYFATL. Over 68–84 the chain is Cytoplasmic; sequence LSRPHAGRYADSLGPKK. Residues 85-105 traverse the membrane as a helical segment; the sequence is IVVFGLCGCFLSGLGYLTAGL. Residue T106 is a topological domain, periplasmic. The helical transmembrane segment at 107–127 threads the bilayer; it reads ASLPVISLLLLCLGRVILGIG. The Cytoplasmic portion of the chain corresponds to 128–155; sequence QSFAGTGSTLWGVGVVGSLHIGRVISWN. Residues 156–176 traverse the membrane as a helical segment; that stretch reads GIVTYGAMAMGAPLGVVFYHW. A topological domain (periplasmic) is located at residue G177. The helical transmembrane segment at 178 to 198 threads the bilayer; that stretch reads GLQALALIIMGVALVAILLAI. At 199 to 223 the chain is on the cytoplasmic side; the sequence is PRPTVKASKGKPLPFRAVLGRVWLY. The helical transmembrane segment at 224 to 244 threads the bilayer; the sequence is GMALALASAGFGVIATFITLF. Residues 245–251 lie on the Periplasmic side of the membrane; that stretch reads YDAKGWD. Residues 252-272 form a helical membrane-spanning segment; it reads GAAFALTLFSCAFVGTRLLFP. Residues 273–282 lie on the Cytoplasmic side of the membrane; that stretch reads NGINRIGGLN. A helical membrane pass occupies residues 283–303; it reads VAMICFSVEIIGLLLVGVATM. The Periplasmic segment spans residues 304–308; the sequence is PWMAK. Residues 309-329 form a helical membrane-spanning segment; the sequence is IGVLLAGAGFSLVFPALGVVA. Residues 330–343 lie on the Cytoplasmic side of the membrane; the sequence is VKAVPQQNQGAALA. A helical membrane pass occupies residues 344–364; the sequence is TYTVFMDLSLGVTGPLAGLVM. Residue S365 is a topological domain, periplasmic. A helical transmembrane segment spans residues 366–386; sequence WAGVPVIYLAAAGLVAIALLL. The Cytoplasmic portion of the chain corresponds to 387–405; sequence TWRLKKRPPEHVPEAASSS.

This sequence belongs to the major facilitator superfamily. YhhS family.

The protein resides in the cell inner membrane. Confers high-level resistance to glyphosate when overexpressed. Overexpression has no effect on intracellular arabinose concentrations. This is an uncharacterized protein from Escherichia coli (strain K12).